We begin with the raw amino-acid sequence, 669 residues long: PDF receptor (669 aa).

Topologically, residues 1–244 (MTLLSNILDC…DIARRTRTLE (244 aa)) are extracellular. Positions 24–52 (RQSGSSGPSPSAPTAGTFESKSMLEPTSS) are disordered. Residues 26-40 (SGSSGPSPSAPTAGT) are compositionally biased toward low complexity. Residues asparagine 111, asparagine 117, asparagine 130, asparagine 137, asparagine 148, and asparagine 198 are each glycosylated (N-linked (GlcNAc...) asparagine). The helical transmembrane segment at 245–265 (IVGLCLSLFALIVSLLIFCTF) threads the bilayer. The Cytoplasmic segment spans residues 266 to 274 (RSLRNNRTK). A helical membrane pass occupies residues 275–295 (IHKNLFVAMVLQVIIRLTLYL). Topologically, residues 296–334 (DQFRRGNKEAATNTSLSVIENTPYLCEASYVLLEYARTA) are extracellular. The N-linked (GlcNAc...) asparagine glycan is linked to asparagine 308. A helical transmembrane segment spans residues 335–355 (MFMWMFIEGLYLHNMVTVAVF). Residues 356–366 (QGSFPLKFFSR) are Cytoplasmic-facing. A helical transmembrane segment spans residues 367-387 (LGWCVPILMTTVWARCTVMYM). The Extracellular segment spans residues 388–411 (DTSLGECLWNYNLTPYYWILEGPR). The chain crosses the membrane as a helical span at residues 412–432 (LAVILLNFCFLVNIIRVLVMK). At 433–449 (LRQSQASDIEQTRKAVR) the chain is on the cytoplasmic side. Residues 450–470 (AAIVLLPLLGITNLLHQLAPL) form a helical membrane-spanning segment. Residues 471-480 (KTATNFAVWS) are Extracellular-facing. A helical membrane pass occupies residues 481–501 (YGTHFLTSFQGFFIALIYCFL). Residues 502 to 669 (NGEVRAVLLK…ESVVFELSEQ (168 aa)) are Cytoplasmic-facing. 2 disordered regions span residues 536–573 (AYNTAPDTDAVQPAGDPSATGKRISPPNKRLNGRKPSS) and 590–614 (PRLQNKAREKGKDRVEKTDAEAEPD). Residues 595 to 609 (KAREKGKDRVEKTDA) are compositionally biased toward basic and acidic residues.

It belongs to the G-protein coupled receptor 2 family. Mainly present in clock neurons of the brain. Localizes in all 4 s-LNv neurons, 1 LNd neuron, 7 DN1 neurons, and 1 DN3 neuron. In addition to the clock neurons, it is also present in approximately 13 pairs of neurons along the ventral nerve cord in third instar larvae, which do not overlap with dopaminergic or serotonergic neurons. Not present in DN2 neurons (at protein level).

The protein resides in the cell membrane. Its function is as follows. Receptor for PDF, a neuropeptide controlling circadian behavioral rhythms. Probably regulates circadian behavioral rhythms through coordination of activities of clock neurons. PDF-binding results in the elevation of cAMP synthesis. Plays a role in sleep regulation and regulates the state transition from sleep to wake. The polypeptide is PDF receptor (Drosophila melanogaster (Fruit fly)).